The sequence spans 395 residues: Carbohydrate sulfotransferase 5 (395 aa).

Residues 1–7 are Cytoplasmic-facing; the sequence is MRLPRFS. A helical; Signal-anchor for type II membrane protein transmembrane segment spans residues 8–26; it reads STVMLSLLMVQTGILVFLV. At 27–395 the chain is on the lumenal side; it reads SRQVPSSPAG…ASSTEKQPES (369 aa). 49–55 contributes to the 3'-phosphoadenylyl sulfate binding site; the sequence is WRSGSSF. N-linked (GlcNAc...) asparagine glycosylation is found at Asn116 and Asn142. 202-210 lines the 3'-phosphoadenylyl sulfate pocket; the sequence is RDPRAVLRS. Residues Asn229 and Asn305 are each glycosylated (N-linked (GlcNAc...) asparagine).

Belongs to the sulfotransferase 1 family. Gal/GlcNAc/GalNAc subfamily. In terms of tissue distribution, expressed in cornea.

The protein localises to the golgi apparatus membrane. In terms of biological role, sulfotransferase that utilizes 3'-phospho-5'-adenylyl sulfate (PAPS) as sulfonate donor to catalyze the transfer of sulfate to position 6 of non-reducing N-acetylglucosamine (GlcNAc) residues of keratan. Mediates sulfation of keratan in cornea. Keratan sulfate plays a central role in maintaining corneal transparency. Acts on the non-reducing terminal GlcNAc of short and long carbohydrate substrates that have poly-N-acetyllactosamine structures. May also have activity toward O-linked sugars of mucin-type acceptors. This is Carbohydrate sulfotransferase 5 (Chst5) from Mus musculus (Mouse).